Consider the following 475-residue polypeptide: Neuronal acetylcholine receptor subunit alpha-5 (475 aa).

Positions 1–29 (MAAPGWGRWVLGLGPLLLQVFLPFQLVAG) are cleaved as a signal peptide. Residues 30 to 261 (RWGPEGAGGG…VIKRLPLFYT (232 aa)) lie on the Extracellular side of the membrane. Cysteine 177 and cysteine 191 are disulfide-bonded. Asparagine 190 and asparagine 236 each carry an N-linked (GlcNAc...) asparagine glycan. Residues cysteine 241 and cysteine 242 are joined by a disulfide bond. The next 3 membrane-spanning stretches (helical) occupy residues 262-282 (LFLIIPCIGLSFLTVLVFYLP), 289-309 (ICLCTSVLVSLTVFLLVIEEI), and 324-344 (LVFTMIFVTLSIMVTVFAINI). At 345 to 437 (HHRSSSTHDA…KFIAQVLDRM (93 aa)) the chain is on the cytoplasmic side. Residues 438-458 (FLWTFLLVSVVGSLGLFVPVI) traverse the membrane as a helical segment. Residues 459-475 (YKWANIIVPIHIGNENK) lie on the Extracellular side of the membrane.

The protein belongs to the ligand-gated ion channel (TC 1.A.9) family. Acetylcholine receptor (TC 1.A.9.1) subfamily. Alpha-5/CHRNA5 sub-subfamily. In terms of assembly, neuronal AChR that forms heteropentamers composed of two different type of subunits: alpha and non-alpha (beta). CHRNA5/alpha-5 subunit is only able to form functional nAChRs when co-assembled with another alpha subunit, can be combined to CHRNA4/alpha-4 or CHRNA3/alpha-3 and CHRNB4/beta-4 or CHRNB2/beta-2 to give rise to functional receptors. Interacts with LYPD6.

The protein localises to the synaptic cell membrane. It is found in the cell membrane. The enzyme catalyses Ca(2+)(in) = Ca(2+)(out). It catalyses the reaction K(+)(in) = K(+)(out). It carries out the reaction Na(+)(in) = Na(+)(out). Activated by a myriad of ligands such as acetylcholine, cytisine, nicotine, choline and epibatidine. Component of neuronal acetylcholine receptors (nAChRs) that function as pentameric, ligand-gated cation channels with high calcium permeability among other activities. nAChRs are excitatory neurotrasnmitter receptors formed by a collection of nAChR subunits known to mediate synaptic transmission in the nervous system and the neuromuscular junction. Each nAchR subunit confers differential attributes to channel properties, including activation, deactivation and desensitization kinetics, pH sensitivity, cation permeability, and binding to allosteric modulators. Has an accessory rather than functional role and is only able to form functional nAChRs when co-assembled with another beta subunit. Participates in pentameric assemblies along with CHRNA3, CHRNA4, CHRNB2 and CHRNB4. Increases receptor sensitivity to acetylcholine and nicotine when associated with CHRNA4 and CHRNB2. Plays a role in nicotine addiction. The protein is Neuronal acetylcholine receptor subunit alpha-5 (CHRNA5) of Bos taurus (Bovine).